The primary structure comprises 149 residues: Large ribosomal subunit protein bL9 (149 aa).

Residue Lys89 is modified to N6-acetyllysine.

Belongs to the bacterial ribosomal protein bL9 family.

Binds to the 23S rRNA. The polypeptide is Large ribosomal subunit protein bL9 (Shigella dysenteriae serotype 1 (strain Sd197)).